The sequence spans 576 residues: (+)-alpha-terpineol synthase (576 aa).

Positions 286, 323, 327, 466, and 469 each coordinate (2E)-geranyl diphosphate. 2 residues coordinate Mg(2+): Asp323 and Asp327. Positions 323–327 (DDVYD) match the DDXXD motif motif. Mg(2+) is bound by residues Asn469, Thr473, and Glu477.

This sequence belongs to the terpene synthase family. Tpsb subfamily. Mg(2+) serves as cofactor. It depends on Mn(2+) as a cofactor.

It catalyses the reaction (2E)-geranyl diphosphate + H2O = (R)-alpha-terpineol + diphosphate. Monoterpene synthase producing mainly (+)-alpha-terpineol (44%) and (-)-limonene (33.6%) and lower amounts of (E)-geraniol (5.9%), linalool (5.0%), myrcene (3.4%), (-)-alpha-pinene (3.3%), (+)-sabinene (3.0%) and alpha-terpinolene (1.6%). This Santalum album (White sandalwood) protein is (+)-alpha-terpineol synthase.